A 1440-amino-acid chain; its full sequence is Protein lin-15B (1440 aa).

Disordered stretches follow at residues 1-22 (MQTL…SSSS), 48-67 (ILRH…HLDA), 618-660 (PKEE…GRPI), and 738-769 (KDEP…PSSY). A compositionally biased stretch (low complexity) spans 10–22 (TSNPASIPTSSSS). Residues 631–646 (STSSPATSSPTIIRPR) show a composition bias toward low complexity. Residues 757–767 (NRTTASSQGPS) are compositionally biased toward polar residues. The THAP-type zinc-finger motif lies at 1135-1209 (NPGVCCFCSK…LLKGMIPDAA (75 aa)). Disordered regions lie at residues 1239-1281 (AIDL…EPSQ), 1298-1350 (RELS…GTSQ), and 1395-1440 (FADE…PSNE). Over residues 1254–1264 (TQEEEEEEEYE) the composition is skewed to acidic residues. Positions 1317–1329 (PNPRGRPRKYPKN) form a DNA-binding region, a.T hook 1. Acidic residues predominate over residues 1396-1407 (ADEEEEEEEYEE). The a.T hook 2 DNA-binding region spans 1418 to 1430 (GRPVGRPRKDANK).

Functionally, synthetic multivulva (synMuv) class B protein. SynMuv proteins are required to repress the induction of vulval development. Acts redundantly with SynMuv class A protein lin-15A to negatively regulate vulval development. Regulates let-23 basal activity. The protein is Protein lin-15B of Caenorhabditis elegans.